Reading from the N-terminus, the 103-residue chain is Acylphosphatase-2 (103 aa).

Residue S2 is modified to N-acetylserine. Positions 13–103 (SVDYEVFGRV…LDFSGFSTRY (91 aa)) constitute an Acylphosphatase-like domain. At C26 the chain carries S-glutathionyl cysteine; alternate. Catalysis depends on residues R28 and N46.

The protein belongs to the acylphosphatase family. Monomer (TU1) or homodimer (TU3) in absence of reducing factors; disulfide linked.

It carries out the reaction an acyl phosphate + H2O = a carboxylate + phosphate + H(+). Its function is as follows. Its physiological role is not yet clear. In Meleagris gallopavo (Wild turkey), this protein is Acylphosphatase-2 (ACYP2).